The sequence spans 142 residues: Transcriptional regulator MraZ (142 aa).

SpoVT-AbrB domains lie at 5-51 (ASAL…PRPE) and 77-120 (AMDV…DSQT).

The protein belongs to the MraZ family. Forms oligomers.

It is found in the cytoplasm. The protein resides in the nucleoid. The chain is Transcriptional regulator MraZ from Burkholderia ambifaria (strain MC40-6).